Here is a 229-residue protein sequence, read N- to C-terminus: Aspartate-rich protein 1 (229 aa).

Residues 84–106 (SEEDNDDAKILPSPVQGSSEDNL) are disordered.

In Homo sapiens (Human), this protein is Aspartate-rich protein 1 (DRICH1).